We begin with the raw amino-acid sequence, 230 residues long: Sugar fermentation stimulation protein homolog (230 aa).

The protein belongs to the SfsA family.

This Clostridium tetani (strain Massachusetts / E88) protein is Sugar fermentation stimulation protein homolog.